Here is a 57-residue protein sequence, read N- to C-terminus: UPF0509 protein YciZ (57 aa).

This sequence belongs to the UPF0509 family.

The protein is UPF0509 protein YciZ (yciZ) of Escherichia coli O157:H7.